The sequence spans 441 residues: GTPase Der (441 aa).

EngA-type G domains are found at residues 4–168 (PVVA…PEDI) and 177–352 (IRIA…EQNS). Residues 10 to 17 (GRPNVGKS), 57 to 61 (DTGGI), 121 to 124 (NKVE), 183 to 190 (GRPNVGKS), 230 to 234 (DTAGM), and 295 to 298 (NKWD) each bind GTP. One can recognise a KH-like domain in the interval 353 to 437 (TRVATATLNT…PIRMIVRQKD (85 aa)).

The protein belongs to the TRAFAC class TrmE-Era-EngA-EngB-Septin-like GTPase superfamily. EngA (Der) GTPase family. As to quaternary structure, associates with the 50S ribosomal subunit.

Its function is as follows. GTPase that plays an essential role in the late steps of ribosome biogenesis. This Desulfitobacterium hafniense (strain DSM 10664 / DCB-2) protein is GTPase Der.